Here is a 290-residue protein sequence, read N- to C-terminus: UPF0761 membrane protein YihY (290 aa).

Transmembrane regions (helical) follow at residues 44–64 (LLSLVPLVAVVFALFAAFPMF), 104–124 (VGACGLIVTALLLMYSIDSAL), 140–160 (FAVYWMILTLGPLLAGASLAI), 183–203 (IFPLLLSWISFWLLYSIVPTI), 210–230 (AIVGAFVAALLFEAGKKGFAL), and 244–264 (VLAVIPILFVWVYWTWCIVLL).

It belongs to the UPF0761 family.

The protein resides in the cell inner membrane. This is UPF0761 membrane protein YihY from Escherichia coli O1:K1 / APEC.